The chain runs to 419 residues: Effector protein BipC (419 aa).

Disordered stretches follow at residues 62–94 and 338–402; these read VAGS…GLER and LQSG…AKSQ. 2 stretches are compositionally biased toward basic and acidic residues: residues 71–94 and 380–392; these read ELAR…GLER and TRDE…REAA.

It belongs to the SctB/SipC family.

It localises to the secreted. The chain is Effector protein BipC (bipC) from Burkholderia pseudomallei (strain 1710b).